A 327-amino-acid chain; its full sequence is Movement protein (327 aa).

Positions 297-327 form a coiled coil; it reads SASSSNTENELARVSQNIDLLKNKLKEICGE.

This sequence belongs to the caulimoviridae movement protein family. In terms of assembly, homotrimer, through the coiled-coil domain. Interacts with VAP. May interact (via N-terminus) with host prenylated Rab acceptor protein 1D (PRA1D).

The protein resides in the host cell junction. It localises to the host plasmodesma. Transports viral genome to neighboring plant cells directly through plasmosdesmata, without any budding. The movement protein allows efficient cell to cell propagation, by bypassing the host cell wall barrier. Acts by forming tubules structures that increase the size exclusion limit (SEL) of plasmodesmata, thereby allowing viral ribonucleocapsids to spread directly to neighboring cells. This is Movement protein from Cauliflower mosaic virus (strain Strasbourg) (CaMV).